We begin with the raw amino-acid sequence, 452 residues long: Probable cysteine protease RD21C (452 aa).

A signal peptide spans 1–29; that stretch reads MATSIKSITLALLIFSVLLISLSLGSVTA. The propeptide at 30-128 is activation peptide; it reads TETTRNEAEA…EKYLYKVGDS (99 aa). An N-linked (GlcNAc...) asparagine glycan is attached at N82. 5 disulfide bridges follow: C150-C192, C184-C226, C284-C335, C363-C375, and C369-C390. C153 is a catalytic residue. Residues H290 and N310 contribute to the active site. A propeptide spans 346 to 452 (removed in mature form); it reads KSSGSNPPKP…KSTNMLVGSA (107 aa).

It belongs to the peptidase C1 family. In terms of assembly, interacts with WSCP.

Probable thiol protease. This is Probable cysteine protease RD21C from Arabidopsis thaliana (Mouse-ear cress).